The following is a 1530-amino-acid chain: Neurexin-1 (1530 aa).

The signal sequence occupies residues 1-30 (MGTALLQRGGCFLLCLSLLLLGCWAELGSG). The Laminin G-like 1 domain occupies 31–212 (LEFPGAEGQW…KLDDEPPNSG (182 aa)). The Extracellular segment spans residues 31 to 1454 (LEFPGAEGQW…EVIRESSSTT (1424 aa)). N-linked (GlcNAc...) asparagine glycosylation is found at asparagine 125 and asparagine 190. Positions 199-221 (SGEVKLDDEPPNSGGGSPCEAGE) are disordered. The EGF-like 1 domain maps to 213 to 256 (GGSPCEAGEEGEGGVCLNGGVCSVVDDQAVCDCSRTGFRGKDCS). 2 cysteine pairs are disulfide-bonded: cysteine 228-cysteine 243 and cysteine 245-cysteine 255. Laminin G-like domains lie at 299-496 (IATF…AFKC) and 503-695 (DPIT…KPSC). Ca(2+)-binding residues include aspartate 345, leucine 362, and methionine 430. Disulfide bonds link cysteine 460–cysteine 496, cysteine 666–cysteine 695, cysteine 703–cysteine 714, cysteine 708–cysteine 723, and cysteine 725–cysteine 735. The region spanning 699–736 (TAKPCLSNPCKNNGMCRDGWNRYVCDCSGTGYLGRSCE) is the EGF-like 2 domain. Serine 705 carries an O-linked (Glc...) serine glycan. Laminin G-like domains follow at residues 741-914 (VLSY…IDYC) and 928-1103 (DPVT…ERGC). The Ca(2+) site is built by aspartate 788 and leucine 805. Residue asparagine 813 is glycosylated (N-linked (GlcNAc...) asparagine). Position 864 (arginine 864) interacts with Ca(2+). 5 disulfide bridges follow: cysteine 906/cysteine 914, cysteine 1075/cysteine 1103, cysteine 1110/cysteine 1121, cysteine 1115/cysteine 1130, and cysteine 1132/cysteine 1142. The EGF-like 3 domain occupies 1106 to 1143 (PSTTCQEDSCSNQGVCLQQWDGISCDCSMTSFSGPLCN). In terms of domain architecture, Laminin G-like 6 spans 1149–1347 (YIFSKGGGQI…DANIAIVGNV (199 aa)). Residues aspartate 1199 and valine 1216 each coordinate Ca(2+). The N-linked (GlcNAc...) asparagine glycan is linked to asparagine 1246. Ca(2+) contacts are provided by isoleucine 1298 and asparagine 1300. O-linked (Xyl...) (heparan sulfate) serine glycosylation occurs at serine 1408. The interval 1411-1443 (CPSDDEDIDPCEPSSGGLANPTRAGGREPYPGS) is disordered. The helical transmembrane segment at 1455–1475 (GMVVGIVAAAALCILILLYAM) threads the bilayer. Topologically, residues 1476-1530 (YKYRNRDEGSYHVDESRNYISNSAQSNGAVVKEKQPSSAKSANKNKKNKDKEYYV) are cytoplasmic. An interaction with CASK region spans residues 1497 to 1523 (NSAQSNGAVVKEKQPSSAKSANKNKKN). The tract at residues 1497 to 1530 (NSAQSNGAVVKEKQPSSAKSANKNKKNKDKEYYV) is disordered.

The protein belongs to the neurexin family. In terms of assembly, interacts (via laminin G-like domain 2 and/or laminin G-like domain 6) with NLGN1 forming a heterotetramer, where one NLGN1 dimer interacts with one NRXN1 dimer. Also interacts (via laminin G-like domain 2 and/or laminin G-like domain 6) with NLGN2, NLGN3 and NLGN4L; interactions with NLGN1, NLGN2, NLGN3 and NLGN4L are calcium-dependent. Interacts (via cytoplasmic C-terminal region) with CASK (via the PDZ, SH3 and guanylate kinase-like domains). Interacts (via cytoplasmic C-terminus) with CASKIN1 and APBA1. Interacts (via laminin G-like domain 2) with NXPH1 and NXPH3. Alpha-type isoforms (neurexin-1-alpha) interact (via laminin G-like domain 2 and/or laminin G-like domain 6) with DAG1 (via alpha-dystroglycan chain). Interacts with LRRTM1, LRRTM2, LRRTM3 and LRRTM4. Interacts with SYT13 and SYTL1. Interacts with CBLN1, CBLN2 and, less avidly, with CBLN4. Interacts with CLSTN3. Alpha-type isoforms interact with alpha-latrotoxin from spider venom. Post-translationally, O-glycosylated; contains heparan sulfate. Heparan sulfate attachment is required for synapse development by mediating interactions with neuroligins and LRRTM2.

Its subcellular location is the presynaptic cell membrane. Cell surface protein involved in cell-cell-interactions, exocytosis of secretory granules and regulation of signal transmission. Function is isoform-specific. Alpha-type isoforms have a long N-terminus with six laminin G-like domains and play an important role in synaptic signal transmission. Alpha-type isoforms play a role in the regulation of calcium channel activity and Ca(2+)-triggered neurotransmitter release at synapses and at neuromuscular junctions. They play an important role in Ca(2+)-triggered exocytosis of secretory granules in pituitary gland. They may affect their functions at synapses and in endocrine cells via their interactions with proteins from the exocytotic machinery. Likewise, alpha-type isoforms play a role in regulating the activity of postsynaptic NMDA receptors, a subtype of glutamate-gated ion channels. Both alpha-type and beta-type isoforms may play a role in the formation or maintenance of synaptic junctions via their interactions (via the extracellular domains) with neuroligin family members, CBLN1 or CBLN2. In vitro, triggers the de novo formation of presynaptic structures. May be involved in specification of excitatory synapses. Alpha-type isoforms were first identified as receptors for alpha-latrotoxin from spider venom. This is Neurexin-1 (NRXN1) from Bos taurus (Bovine).